The primary structure comprises 225 residues: Peptidyl-prolyl cis-trans isomerase D (225 aa).

Residues 1 to 22 (MKLQFFSFITLFACLFTTAIFA) form the signal peptide. The PPIase cyclophilin-type domain occupies 37–195 (YFDINHGDKQ…KEVIIVESGE (159 aa)). N139 carries N-linked (GlcNAc...) asparagine glycosylation. A Prevents secretion from ER motif is present at residues 222-225 (HDEL).

The protein belongs to the cyclophilin-type PPIase family. PPIase B subfamily.

It localises to the endoplasmic reticulum lumen. The enzyme catalyses [protein]-peptidylproline (omega=180) = [protein]-peptidylproline (omega=0). Its function is as follows. PPIases accelerate the folding of proteins. It catalyzes the cis-trans isomerization of proline imidic peptide bonds in oligopeptides. The protein is Peptidyl-prolyl cis-trans isomerase D of Saccharomyces cerevisiae (strain ATCC 204508 / S288c) (Baker's yeast).